The sequence spans 319 residues: Cytochrome c biogenesis protein CcsA (319 aa).

A run of 8 helical transmembrane segments spans residues 15-35, 44-64, 71-91, 96-116, 141-161, 223-243, 258-278, and 284-304; these read FSIVSIVITIHLITLVVNKIV, GMILTFSCITGLLVIRWIFAG, LYESLIFLSWSFYIIHMIPYF, LSAITAPGAIFTQGFATSGFF, MILAYAALLCGSLLSVALLVI, VISLGFLFLTMGILSGAVWAN, WAFITWTIFAIYLHIKTNINL, and AIVASIGFLIIWICYFGVNLL.

The protein belongs to the CcmF/CycK/Ccl1/NrfE/CcsA family. May interact with Ccs1.

It is found in the plastid. The protein resides in the chloroplast thylakoid membrane. Functionally, required during biogenesis of c-type cytochromes (cytochrome c6 and cytochrome f) at the step of heme attachment. The chain is Cytochrome c biogenesis protein CcsA from Fagopyrum esculentum subsp. ancestrale (Wild buckwheat).